The sequence spans 232 residues: Ribonuclease 3 (232 aa).

Positions 5-134 constitute an RNase III domain; it reads QTVLKNHFAI…FLGALLLDKD (130 aa). Glu-47 contributes to the Mg(2+) binding site. Asp-51 is an active-site residue. Residues Asp-120 and Glu-123 each coordinate Mg(2+). Glu-123 is an active-site residue. Positions 160–229 constitute a DRBM domain; it reads DYKTHLQELL…AKNAVEKGLD (70 aa).

The protein belongs to the ribonuclease III family. Homodimer. It depends on Mg(2+) as a cofactor.

The protein resides in the cytoplasm. The enzyme catalyses Endonucleolytic cleavage to 5'-phosphomonoester.. Functionally, digests double-stranded RNA. Involved in the processing of primary rRNA transcript to yield the immediate precursors to the large and small rRNAs (23S and 16S). Processes some mRNAs, and tRNAs when they are encoded in the rRNA operon. Processes pre-crRNA and tracrRNA of type II CRISPR loci if present in the organism. The polypeptide is Ribonuclease 3 (Streptococcus pneumoniae (strain CGSP14)).